A 514-amino-acid chain; its full sequence is Prespore vesicle protein (514 aa).

The first 18 residues, 1–18, serve as a signal peptide directing secretion; that stretch reads MRLYLLSLILVFYASVSS. Follistatin-like domains are found at residues 40 to 62 and 240 to 262; these read LCGT…YICR and TCET…AQCI. A compositionally biased stretch (polar residues) spans 285-297; it reads QRNAKPAQQQRSA. A disordered region spans residues 285–514; the sequence is QRNAKPAQQQ…QARPATQKRN (230 aa). Low complexity-rich tracts occupy residues 328 to 391, 398 to 413, and 424 to 457; these read QHNA…HTAA, AAQQ…AKPA, and AAQQ…KPAK. Positions 480-508 are enriched in polar residues; the sequence is RIRQQNLVKQAAQKKQTSQRAASKNQARP.

The chain is Prespore vesicle protein (psvA) from Dictyostelium discoideum (Social amoeba).